Reading from the N-terminus, the 296-residue chain is L-ornithine N(alpha)-acyltransferase (296 aa).

This sequence belongs to the acetyltransferase family. OlsB subfamily.

It catalyses the reaction a (3R)-hydroxyacyl-[ACP] + L-ornithine = a lyso-ornithine lipid + holo-[ACP] + H(+). It functions in the pathway lipid metabolism. Its function is as follows. Catalyzes the first step in the biosynthesis of ornithine lipids, which are phosphorus-free membrane lipids. Catalyzes the 3-hydroxyacyl-acyl carrier protein-dependent acylation of ornithine to form lyso-ornithine lipid (LOL). In Rhizobium meliloti (strain 1021) (Ensifer meliloti), this protein is L-ornithine N(alpha)-acyltransferase.